The primary structure comprises 58 residues: Probable ferredoxin (58 aa).

4Fe-4S ferredoxin-type domains follow at residues valine 2 to aspartate 30 and glycine 31 to glutamate 58. Residues cysteine 10, cysteine 13, cysteine 16, cysteine 20, cysteine 40, cysteine 43, cysteine 46, and cysteine 50 each coordinate [4Fe-4S] cluster.

It depends on [4Fe-4S] cluster as a cofactor.

Ferredoxins are iron-sulfur proteins that transfer electrons in a wide variety of metabolic reactions. This chain is Probable ferredoxin, found in Methanosarcina thermophila.